We begin with the raw amino-acid sequence, 30 residues long: Rothein 3.1 (30 aa).

A Leucine amide modification is found at Leu-30.

In terms of tissue distribution, expressed by the skin dorsal glands.

The protein resides in the secreted. Functionally, lacks antimicrobial activity. Does not inhibit the formation of NO by neuronal nitric oxide. The chain is Rothein 3.1 from Litoria rothii (Roth's tree frog).